We begin with the raw amino-acid sequence, 384 residues long: Cytochrome b (384 aa).

A run of 4 helical transmembrane segments spans residues 32–52 (VGSL…FLAM), 76–98 (WLIR…LHIG), 113–133 (LWVI…MGYC), and 179–199 (FFAL…MHLM). The heme b site is built by His82 and His96. Residues His183 and His197 each coordinate heme b. His202 serves as a coordination point for a ubiquinone. 4 helical membrane passes run 225 to 245 (FIFK…LFVF), 289 to 309 (LGGV…PYTD), 321 to 341 (LSKF…NLGQ), and 348 to 368 (YIEL…LIVP).

Belongs to the cytochrome b family. In terms of assembly, fungal cytochrome b-c1 complex contains 10 subunits; 3 respiratory subunits, 2 core proteins and 5 low-molecular weight proteins. Cytochrome b-c1 complex is a homodimer. The cofactor is heme b.

The protein localises to the mitochondrion inner membrane. Component of the ubiquinol-cytochrome c reductase complex (complex III or cytochrome b-c1 complex) that is part of the mitochondrial respiratory chain. The b-c1 complex mediates electron transfer from ubiquinol to cytochrome c. Contributes to the generation of a proton gradient across the mitochondrial membrane that is then used for ATP synthesis. This is Cytochrome b (COB) from Candida parapsilosis (Yeast).